Reading from the N-terminus, the 343-residue chain is MEQEETYLELYLDQCAAQDGLAPPRSPLFSPVVPYDMYILNASNPDTAFNSNPEVKETSGDFSSVDLSFLPDEVTQENKDQPVISKHETEENSESQSPQSRLPSPSEQDVGLGLNSSSLSNSHSQLHPGDTDSVQPSPEKPNSDSLSLASITPMTPMTPISECCGIVPQLQNIVSTVNLACKLDLKKIALHAKNAEYNPKRFAAVIMRIREPRTTALIFSSGKMVCTGAKSEEQSRLAARKYARVVQKLGFPARFLDFKIQNMVGSCDVRFPIRLEGLVLTHQQFSSYEPELFPGLIYRMVKPRIVLLIFVSGKVVLTGAKERSEIYEAFENIYPILKGFKKA.

A disordered region spans residues 71–152 (PDEVTQENKD…SDSLSLASIT (82 aa)). A compositionally biased stretch (basic and acidic residues) spans 76 to 90 (QENKDQPVISKHETE). Residues 94-127 (ESQSPQSRLPSPSEQDVGLGLNSSSLSNSHSQLH) show a composition bias toward low complexity. A compositionally biased stretch (polar residues) spans 143-152 (SDSLSLASIT).

The protein belongs to the TBP family. As to quaternary structure, interacts with TAF3. Ubiquitously expressed in all tissues examined with highest levels in heart, lung, ovary, spleen and testes.

It is found in the cytoplasm. Its subcellular location is the nucleus. In terms of biological role, transcription factor required in complex with TAF3 for the differentiation of myoblasts into myocytes. The complex replaces TFIID at specific promoters at an early stage in the differentiation process. The polypeptide is TATA box-binding protein-like 2 (Homo sapiens (Human)).